Reading from the N-terminus, the 166-residue chain is Glutamyl-tRNA(Gln) amidotransferase subunit C-2, mitochondrial (166 aa).

It belongs to the GatC family. In terms of assembly, subunit of the heterotrimeric GatCAB amidotransferase (AdT) complex, composed of A, B and C subunits.

Its subcellular location is the mitochondrion. The catalysed reaction is L-glutamyl-tRNA(Gln) + L-glutamine + ATP + H2O = L-glutaminyl-tRNA(Gln) + L-glutamate + ADP + phosphate + H(+). Its function is as follows. Allows the formation of correctly charged Gln-tRNA(Gln) through the transamidation of misacylated Glu-tRNA(Gln) in the mitochondria. The reaction takes place in the presence of glutamine and ATP through an activated gamma-phospho-Glu-tRNA(Gln). This Culex quinquefasciatus (Southern house mosquito) protein is Glutamyl-tRNA(Gln) amidotransferase subunit C-2, mitochondrial.